The chain runs to 504 residues: Maturase K (504 aa).

It belongs to the intron maturase 2 family. MatK subfamily.

The protein resides in the plastid. The protein localises to the chloroplast. In terms of biological role, usually encoded in the trnK tRNA gene intron. Probably assists in splicing its own and other chloroplast group II introns. The chain is Maturase K from Aruncus dioicus (Goat's beard).